The primary structure comprises 263 residues: Pollen allergen Phl p 1 (263 aa).

A signal peptide spans 1–23; it reads MASSSSVLLVVVLFAVFLGSAYG. Residue asparagine 32 is glycosylated (N-linked (GlcNAc...) asparagine). In terms of domain architecture, Expansin-like EG45 spans 61 to 167; sequence GGACGYKDVD…RRVKCKYPEG (107 aa). 3 disulfide bridges follow: cysteine 64-cysteine 92, cysteine 95-cysteine 162, and cysteine 100-cysteine 106. An Expansin-like CBD domain is found at 181-262; it reads NYLALLVKYV…GWKADTSYES (82 aa).

This sequence belongs to the expansin family. Expansin B subfamily. In terms of assembly, homodimer.

It localises to the secreted. The chain is Pollen allergen Phl p 1 (PHLPI) from Phleum pratense (Common timothy).